Here is a 318-residue protein sequence, read N- to C-terminus: MPNIKIFSGSSHQDLSQKIADRLGLELGKVVTKKFSNQETCVEIDESVRGEDVYIVQSGCGEINDSLMELLIMINACKIASASRVTAVIPCFPYARQDKKDKSRSPISAKLVANMLSIAGADHIITMDLHASQIQGFFDIPVDNLYAEPTVLKWIRENIPEWKNCIIVSPDAGGAKRVTSIADQLNVDFALIHKERKKANEVDCIVLVGDVNDRVAILVDDMADTCVTICLAADKLLSAGATRVYAILTHGIFSGPAISRINTACFEAVVVTNTIPQDEKMKHCSKIRVIDISMILAEAIRRTHNGESVSYLFSHVPL.

Residue 96 to 101 coordinates ATP; the sequence is RQDKKD. Mg(2+)-binding residues include Asp-128, His-130, Asp-139, and Asp-143. Residue His-130 coordinates ATP. A binding of phosphoribosylpyrophosphate region spans residues 212-227; that stretch reads NDRVAILVDDMADTCV.

It belongs to the ribose-phosphate pyrophosphokinase family. As to quaternary structure, homodimer. The active form is probably a hexamer composed of 3 homodimers. Requires Mg(2+) as cofactor. In terms of tissue distribution, testis.

It carries out the reaction D-ribose 5-phosphate + ATP = 5-phospho-alpha-D-ribose 1-diphosphate + AMP + H(+). It functions in the pathway metabolic intermediate biosynthesis; 5-phospho-alpha-D-ribose 1-diphosphate biosynthesis; 5-phospho-alpha-D-ribose 1-diphosphate from D-ribose 5-phosphate (route I): step 1/1. With respect to regulation, activated by magnesium and inorganic phosphate. Its function is as follows. Catalyzes the synthesis of phosphoribosylpyrophosphate (PRPP) that is essential for nucleotide synthesis. The polypeptide is Ribose-phosphate pyrophosphokinase 3 (PRPS1L1) (Homo sapiens (Human)).